The chain runs to 263 residues: Proteasome subunit alpha type-1 (263 aa).

The residue at position 1 (methionine 1) is an N-acetylmethionine. Serine 110 bears the Phosphoserine; alternate mark. An O-linked (GlcNAc) serine; alternate glycan is attached at serine 110. A Glycyl lysine isopeptide (Lys-Gly) (interchain with G-Cter in ubiquitin) cross-link involves residue lysine 115. Serine 177 is modified (phosphoserine). Lysine 208 participates in a covalent cross-link: Glycyl lysine isopeptide (Lys-Gly) (interchain with G-Cter in ubiquitin). Residues 232-263 (FLEGLEERPQRKAQPTQPADEPAEKADEPMEH) form a disordered region. Residues 253-263 (PAEKADEPMEH) show a composition bias toward basic and acidic residues.

This sequence belongs to the peptidase T1A family. The 26S proteasome consists of a 20S proteasome core and two 19S regulatory subunits. The 20S proteasome core is a barrel-shaped complex made of 28 subunits that are arranged in four stacked rings. The two outer rings are each formed by seven alpha subunits, and the two inner rings are formed by seven beta subunits. The proteolytic activity is exerted by three beta-subunits PSMB5, PSMB6 and PSMB7. Interacts with NOTCH3. Interacts with ZFAND1.

It localises to the cytoplasm. The protein localises to the nucleus. In terms of biological role, component of the 20S core proteasome complex involved in the proteolytic degradation of most intracellular proteins. This complex plays numerous essential roles within the cell by associating with different regulatory particles. Associated with two 19S regulatory particles, forms the 26S proteasome and thus participates in the ATP-dependent degradation of ubiquitinated proteins. The 26S proteasome plays a key role in the maintenance of protein homeostasis by removing misfolded or damaged proteins that could impair cellular functions, and by removing proteins whose functions are no longer required. Associated with the PA200 or PA28, the 20S proteasome mediates ubiquitin-independent protein degradation. This type of proteolysis is required in several pathways including spermatogenesis (20S-PA200 complex) or generation of a subset of MHC class I-presented antigenic peptides (20S-PA28 complex). The polypeptide is Proteasome subunit alpha type-1 (PSMA1) (Bos taurus (Bovine)).